Here is a 432-residue protein sequence, read N- to C-terminus: MDHSMSKKLHDEALLHIVGGVNSPSRSNKGVGGGIPVTMERASGAYFYDVDGNKYIDYLAAFGPIITGHAHPHITEAITKAAQNGVLYGTPTKHEITFAKMLKEAIPSLEKVRFTNSGTEAVMTTIRVARAYTGRDKIIKFAGCYHGHFDLVLVEAGSGPSTLGIPDSAGVTKSTAEEVITVPFNDFASFKEALAVWGDQVAAVLVEPIVGNFGMVAPEDGFLEAVNELAHANGSLVIYDEVITAFRFMYGGAQNYLGVIPDLTAMGKIIGGGLPIGAYGGRIDIMEKVAPLGPAYQAGTHAGNPASILSGIACLEVLQEEGLYERFEKYGSMLKDGIEKAALKHGIAVTVNQIVGALTVYFTEDPVTNYAEAGATNGELFGRFFKGMLEEGINLAPSKYEAWFITSAHSEADILETIQAVDTVFGKMVQDN.

Lys-268 carries the post-translational modification N6-(pyridoxal phosphate)lysine.

Belongs to the class-III pyridoxal-phosphate-dependent aminotransferase family. HemL subfamily. In terms of assembly, homodimer. Pyridoxal 5'-phosphate serves as cofactor.

The protein localises to the cytoplasm. The enzyme catalyses (S)-4-amino-5-oxopentanoate = 5-aminolevulinate. It functions in the pathway porphyrin-containing compound metabolism; protoporphyrin-IX biosynthesis; 5-aminolevulinate from L-glutamyl-tRNA(Glu): step 2/2. This Listeria monocytogenes serotype 4b (strain F2365) protein is Glutamate-1-semialdehyde 2,1-aminomutase 2.